The following is an 84-amino-acid chain: LYR motif-containing protein 5B (84 aa).

It belongs to the complex I LYR family.

The sequence is that of LYR motif-containing protein 5B (lyrm5b) from Danio rerio (Zebrafish).